Here is a 30-residue protein sequence, read N- to C-terminus: Photosystem I reaction center subunit XII (30 aa).

Residues 7–27 (VFIGLVIALVPAILAFKLGLS) form a helical membrane-spanning segment.

The protein belongs to the PsaM family.

Its subcellular location is the plastid. It is found in the chloroplast thylakoid membrane. This chain is Photosystem I reaction center subunit XII, found in Cyanidium caldarium (Red alga).